A 634-amino-acid chain; its full sequence is 1-deoxy-D-xylulose-5-phosphate synthase (634 aa).

Residues H74 and 115–117 contribute to the thiamine diphosphate site; that span reads AHS. Residue D146 coordinates Mg(2+). Thiamine diphosphate contacts are provided by residues 147 to 148, N176, Y283, and E365; that span reads GA. N176 is a Mg(2+) binding site.

The protein belongs to the transketolase family. DXPS subfamily. As to quaternary structure, homodimer. Mg(2+) is required as a cofactor. Requires thiamine diphosphate as cofactor.

The enzyme catalyses D-glyceraldehyde 3-phosphate + pyruvate + H(+) = 1-deoxy-D-xylulose 5-phosphate + CO2. The protein operates within metabolic intermediate biosynthesis; 1-deoxy-D-xylulose 5-phosphate biosynthesis; 1-deoxy-D-xylulose 5-phosphate from D-glyceraldehyde 3-phosphate and pyruvate: step 1/1. In terms of biological role, catalyzes the acyloin condensation reaction between C atoms 2 and 3 of pyruvate and glyceraldehyde 3-phosphate to yield 1-deoxy-D-xylulose-5-phosphate (DXP). This chain is 1-deoxy-D-xylulose-5-phosphate synthase, found in Burkholderia thailandensis (strain ATCC 700388 / DSM 13276 / CCUG 48851 / CIP 106301 / E264).